The primary structure comprises 269 residues: Sulfur carrier protein FdhD (269 aa).

Cys-111 serves as the catalytic Cysteine persulfide intermediate.

It belongs to the FdhD family.

The protein localises to the cytoplasm. Required for formate dehydrogenase (FDH) activity. Acts as a sulfur carrier protein that transfers sulfur from IscS to the molybdenum cofactor prior to its insertion into FDH. This Brucella abortus biovar 1 (strain 9-941) protein is Sulfur carrier protein FdhD.